The sequence spans 737 residues: uncharacterized protein (737 aa).

The next 7 helical transmembrane spans lie at L11–L31, E36–F56, W60–Y80, T118–Y138, I142–Y162, A164–L184, and V200–A220. A disordered region spans residues P556 to H611. Positions K581–V603 are enriched in basic and acidic residues. Residues L618 to F638 form a helical membrane-spanning segment.

It is found in the cell membrane. This is an uncharacterized protein from Bacillus subtilis (strain 168).